The chain runs to 1077 residues: Receptor-like protein 1 (1077 aa).

The N-terminal stretch at 1-38 (MRTDERRRWWVKPKKHITLVFITITMIIQFQMKGCVSC) is a signal peptide. The segment at 39-120 (VETERMGLLQ…SQTRSLNLSL (82 aa)) is N-cap. The Extracellular segment spans residues 39–1024 (VETERMGLLQ…NEEEGNVIDM (986 aa)). Residues Asn117, Asn131, and Asn139 are each glycosylated (N-linked (GlcNAc...) asparagine). LRR repeat units follow at residues 124 to 147 (FPQL…FLGF), 153 to 176 (LDKL…FLNA), 177 to 201 (ATSI…ELSN), 202 to 225 (MTNL…GLTD), 227 to 250 (RDLE…SLST), 251 to 274 (AKLK…GLES), 275 to 299 (LQEL…VLKD), 300 to 324 (LKML…GLEI), 326 to 348 (TSLQ…YLGI), 351 to 376 (LMKL…NLTH), 378 to 397 (RTLD…FVSG), and 399 to 424 (PSVL…LVNQ). A glycan (N-linked (GlcNAc...) asparagine) is linked at Asn201. Asn240 carries N-linked (GlcNAc...) asparagine glycosylation. An N-linked (GlcNAc...) asparagine glycan is attached at Asn289. 3 N-linked (GlcNAc...) asparagine glycosylation sites follow: Asn373, Asn390, and Asn423. An LRR 13; degenerate repeat occupies 425-449 (TRLTVFKLSSKVGVIQVQTESSWAP). LRR repeat units follow at residues 450–473 (LFQL…FLVH), 474–498 (QRDL…LVKN), 499–522 (NTRL…ILVH), 524–545 (LQVL…IGMV), 546–570 (FPNL…IGEM), 572–594 (SLQV…FLSG), 595–621 (CYSL…NLTG), 623–643 (VGLF…LLKS), 644–666 (KNLT…WIGR), 667–694 (ISRL…PWVE), 696–713 (MDIS…NVNF), 714–737 (PSLR…LFKA), 739–761 (GLEV…IDQT), 762–785 (SKLR…ICQL), 786–808 (SEVG…CFSK), 877–901 (LRYM…IGDL), 902–925 (QNIR…ISKL), 927–949 (GLES…LADL), and 951–970 (SLGY…PFKG). 2 N-linked (GlcNAc...) asparagine glycosylation sites follow: Asn460 and Asn498. A glycan (N-linked (GlcNAc...) asparagine) is linked at Asn553. N-linked (GlcNAc...) asparagine glycosylation is found at Asn618, Asn631, and Asn645. 2 N-linked (GlcNAc...) asparagine glycosylation sites follow: Asn749 and Asn771. Asn908 carries an N-linked (GlcNAc...) asparagine glycan. N-linked (GlcNAc...) asparagine glycosylation is found at Asn956 and Asn961. Residues 971-1024 (HLVTFDERSYIGNAHLCGLPTNKNCISQRVPEPPSVSTHAKEEENEEEGNVIDM) form a C-cap/acidic domain region. A helical transmembrane segment spans residues 1025 to 1045 (VWFYWTCAAVYISTSLALFAF). Residues 1046-1077 (LYIDSRWSREWFYRVDLCVHHILQFKRSSVCN) lie on the Cytoplasmic side of the membrane.

Belongs to the RLP family.

The protein localises to the cell membrane. Functionally, involved in plant defense. Confers resistance to the bacterial pathogen Xanthomonas through recognition of the microbe-associated molecular pattern (MAMP) eMax. Functionality seems to depend on the presence of the receptor kinase SOBIR1 as an adapter protein. The protein is Receptor-like protein 1 of Arabidopsis thaliana (Mouse-ear cress).